The following is a 295-amino-acid chain: Secreted frizzled-related protein 2 (295 aa).

The N-terminal stretch at 1–24 (MPRGPASLLLLVLASHCCLGSARG) is a signal peptide. Residues 35–155 (YKRSNCKPIP…PQDNDLCIPL (121 aa)) enclose the FZ domain. 8 cysteine pairs are disulfide-bonded: cysteine 40–cysteine 103, cysteine 50–cysteine 96, cysteine 87–cysteine 125, cysteine 114–cysteine 152, cysteine 118–cysteine 142, cysteine 172–cysteine 245, cysteine 175–cysteine 247, and cysteine 190–cysteine 295. In terms of domain architecture, NTR spans 172–295 (CEACKTKNED…ISRSIRKLQC (124 aa)).

Belongs to the secreted frizzled-related protein (sFRP) family. In terms of tissue distribution, highly expressed in the eye. Weaker expression in heart and lung.

It is found in the secreted. In terms of biological role, soluble frizzled-related proteins (sFRPS) function as modulators of Wnt signaling through direct interaction with Wnts. They have a role in regulating cell growth and differentiation in specific cell types. SFRP2 may be important for eye retinal development and for myogenesis. In Mus musculus (Mouse), this protein is Secreted frizzled-related protein 2.